Consider the following 334-residue polypeptide: Trans-1,2-dihydrobenzene-1,2-diol dehydrogenase (334 aa).

This sequence belongs to the Gfo/Idh/MocA family. In terms of assembly, homodimer.

It carries out the reaction (1R,2R)-1,2-dihydrobenzene-1,2-diol + NADP(+) = catechol + NADPH + H(+). It catalyses the reaction D-xylose + NADP(+) = D-xylono-1,5-lactone + NADPH + H(+). The polypeptide is Trans-1,2-dihydrobenzene-1,2-diol dehydrogenase (dhdh) (Danio rerio (Zebrafish)).